A 160-amino-acid polypeptide reads, in one-letter code: Major pollen allergen Bet v 1-J (160 aa).

Lys-55, Tyr-82, Tyr-84, and Asn-101 together coordinate brassinolide. Hydrophobic ligand pocket regions lie at residues Lys-116–Asn-118 and Gln-133–Gly-141.

It belongs to the BetVI family. In terms of tissue distribution, pollen.

Its subcellular location is the cytoplasm. May be a general steroid carrier protein. The chain is Major pollen allergen Bet v 1-J from Betula pendula (European white birch).